We begin with the raw amino-acid sequence, 394 residues long: GDP-mannose transporter (394 aa).

Topologically, residues 1 to 56 (MSNKKNEDIEMRAVEGANDFGGEKDPFLGRNSPVLRPRGREPTASAYFGKLDNSPG) are cytoplasmic. The chain crosses the membrane as a helical span at residues 57–77 (ASIIAYCLSSISMTVVNKYVV). Over 78-81 (SGES) the chain is Lumenal. Residues 82 to 102 (WNLNFFYLGVQSLVCTIAILL) traverse the membrane as a helical segment. Over 103–122 (SRQTGLIKNLAPFDSNKAKR) the chain is Cytoplasmic. Residues 123 to 145 (WFPVSLLLVSMIYTGANALQYLS) form a helical membrane-spanning segment. Residues 146–150 (VPVYT) are Lumenal-facing. Residues 151–168 (IFKNLTIIVIAYGEVLWF) traverse the membrane as a helical segment. Residues 169–174 (GGSVTP) are Cytoplasmic-facing. The helical transmembrane segment at 175–199 (LMLLSFGLMVLSSVVAAWADIQAAI) threads the bilayer. The Lumenal segment spans residues 200 to 207 (DGVGHSAE). Residues 208 to 228 (TSAALATLNAGYAWMGLNVVC) traverse the membrane as a helical segment. The Cytoplasmic portion of the chain corresponds to 229 to 249 (TSSYLLGMRKVIKKMNFKDYD). A helical transmembrane segment spans residues 250-270 (SMFYNNLLTIPVLVVCSLLVE). Topologically, residues 271–288 (DWSSENLAKNFPIETRNK) are lumenal. A helical membrane pass occupies residues 289 to 309 (LMVGMIYSGLAAIFISYCSAW). Over 310-317 (CIRVTSST) the chain is Cytoplasmic. The chain crosses the membrane as a helical span at residues 318 to 338 (TYSMVGALNKLPIAISGLIFF). The Lumenal segment spans residues 339-341 (DAP). Residues 342-362 (ITFGSITAIAVGFVSGLVFAW) traverse the membrane as a helical segment. Residues 363–394 (AKVRQKAQEAGLLPTTKPTMSASAQSNRDANS) lie on the Cytoplasmic side of the membrane.

It belongs to the TPT transporter family. SLC35D subfamily. In terms of assembly, homooligomer.

It is found in the golgi apparatus membrane. It localises to the cytoplasmic vesicle membrane. The protein resides in the endoplasmic reticulum membrane. Involved in the import of GDP-mannose from the cytoplasm into the Golgi lumen. In Chaetomium globosum (strain ATCC 6205 / CBS 148.51 / DSM 1962 / NBRC 6347 / NRRL 1970) (Soil fungus), this protein is GDP-mannose transporter (VRG4).